A 1556-amino-acid polypeptide reads, in one-letter code: Ras guanine nucleotide exchange factor G (1556 aa).

4 disordered regions span residues 19-63 (IGNI…KNRG), 93-141 (LQLN…SSTT), 163-239 (SHVT…LSPS), and 254-296 (ATDS…NNNS). Composition is skewed to low complexity over residues 25–54 (NNNN…SGSN) and 96–141 (NDTD…SSTT). The span at 170–186 (DDDDDDESSSSEEDFDS) shows a compositional bias: acidic residues. Positions 196-216 (TSSTTATTTTTTTSVSPLTSS) are enriched in low complexity. The span at 256–271 (DSDNQSLEPCNNKTIV) shows a compositional bias: polar residues. Positions 279–295 (DNNNNHNNNNNNNNNNN) are enriched in low complexity. An F-box 1 domain is found at 307-353 (NKTFLDLDEKIYLKIFGYLFAEDLCSINRVSKHLCNIINNQQLWKDL). The interval 385–416 (NNNNNNNNNNNNNNNNSNISNNNNNINNSNGN) is disordered. The F-box 2 domain occupies 679 to 726 (VFDISRVSDILLIKIFRNLDSIKDLSVCQRVSKRWNKAIAISSLWEQL). 2 disordered regions span residues 762–815 (QPSP…NGLN) and 827–1101 (GSNL…ITNN). Positions 827–848 (GSNLSNGGNSGSSFSPFNPLSG) are enriched in low complexity. Gly residues predominate over residues 849–866 (SNGGSSFGPFGSGGGGGS). Low complexity-rich tracts occupy residues 867–880 (NSNI…LNSS) and 888–910 (FLAM…TIST). Over residues 911 to 935 (NCTPTGGSTTNSPNFQSPMVSSSTV) the composition is skewed to polar residues. 2 stretches are compositionally biased toward low complexity: residues 943 to 957 (SPNL…ISLS) and 972 to 1053 (PDSS…IQPI). Over residues 1059-1076 (VNNNGSQSDLSKISDLNA) the composition is skewed to polar residues. A compositionally biased stretch (low complexity) spans 1077–1101 (NPNTTTTTTTNTIESSSSSSSITNN). The N-terminal Ras-GEF domain maps to 1116–1244 (MINVQKLMNL…LIRSFSRKLS (129 aa)). Positions 1254 to 1279 (IGITGGKSSRKGGGSGSGSGSGGGSG) are disordered. The span at 1264–1279 (KGGGSGSGSGSGGGSG) shows a compositional bias: gly residues. One can recognise a Ras-GEF domain in the interval 1317–1548 (PAEEIAKQLT…YRVSMQREPR (232 aa)).

Its function is as follows. Promotes the exchange of Ras-bound GDP by GTP. The polypeptide is Ras guanine nucleotide exchange factor G (gefG) (Dictyostelium discoideum (Social amoeba)).